The chain runs to 1131 residues: Major DNA-binding protein (1131 aa).

Positions 790 to 791 (FW) match the Required for filament formation motif. A required for nuclear localization region spans residues 1112-1131 (LKCEETEHENEEPSLKKARL).

It belongs to the herpesviridae major DNA-binding protein family. Homooligomers. Forms double-helical filaments necessary for the formation of replication compartments within the host nucleus. Interacts with the origin-binding protein. Interacts with the helicase primase complex; this interaction stimulates primer synthesis activity of the helicase-primase complex. Interacts with the DNA polymerase. Interacts with the alkaline exonuclease; this interaction increases its nuclease processivity.

It is found in the host nucleus. Functionally, single-stranded DNA-binding protein required for DNA replication. In terms of biological role, plays several crucial roles in viral infection. Participates in the opening of the viral DNA origin to initiate replication by interacting with the origin-binding protein. May disrupt loops, hairpins and other secondary structures present on ssDNA to reduce and eliminate pausing of viral DNA polymerase at specific sites during elongation. Promotes viral DNA recombination by performing strand-transfer, characterized by the ability to transfer a DNA strand from a linear duplex to a complementary single-stranded DNA circle. Can also catalyze the renaturation of complementary single strands. Additionally, reorganizes the host cell nucleus, leading to the formation of prereplicative sites and replication compartments. This process is driven by the protein which can form double-helical filaments in the absence of DNA. The protein is Major DNA-binding protein of Human herpesvirus 7 (strain JI) (HHV-7).